The primary structure comprises 346 residues: Protein RecA (346 aa).

Position 65-72 (65-72) interacts with ATP; the sequence is GPESSGKT.

Belongs to the RecA family.

Its subcellular location is the cytoplasm. Functionally, can catalyze the hydrolysis of ATP in the presence of single-stranded DNA, the ATP-dependent uptake of single-stranded DNA by duplex DNA, and the ATP-dependent hybridization of homologous single-stranded DNAs. It interacts with LexA causing its activation and leading to its autocatalytic cleavage. This chain is Protein RecA, found in Enterococcus mundtii.